The sequence spans 440 residues: Branched-chain amino acid permease BrnQ (440 aa).

Transmembrane regions (helical) follow at residues 9–29 (YIIIIGLMLFALFFGAGNLIF), 46–66 (AGFLVTGVGLPLLAITAFVFS), 80–100 (PVFGIVFTTILYLAIGPFFAI), 121–141 (SPVSLIIFTILFFALACLLSL), 149–169 (IVGKFLTPIKLTFIGLLVAVA), 196–216 (GYLTLDALVAFVFGIIIVNAL), 227–247 (LIVVCAKAAAIAAVLLAVMYT), 284–304 (ILLGLMITVACLTTSVGLITA), 321–341 (IAVVLSVFSTLVANIGLTQLI), 348–368 (LLTMYPIAISLIFLTFLHSVF), 378–398 (SLLFAFIISLFDGLKAAGIKI), and 414–434 (IGLGWLIPAIAGGICGYILSI).

The protein belongs to the branched chain amino acid transporter family.

Its subcellular location is the cell membrane. Its function is as follows. Branched-chain amino acid transport system which is involved in the uptake of isoleucine and valine. Probably does not transport leucine. Together with BcaP and BraB, plays an important role in the activation of CodY, a branched-chain amino acid-responsive transcriptional regulator that controls the expression of several dozen transcription units in B.subtilis. In Bacillus subtilis (strain 168), this protein is Branched-chain amino acid permease BrnQ.